The chain runs to 224 residues: Germin-like protein 8-9 (224 aa).

Positions 1–22 are cleaved as a signal peptide; it reads MASPSFCLFAALLALVSWQAIA. A disulfide bridge connects residues Cys-32 and Cys-47. The Cupin type-1 domain occupies 62–212; it reads AMLDTPRKTN…AFQVGKGTID (151 aa). Asn-76 carries N-linked (GlcNAc...) asparagine glycosylation. Mn(2+) contacts are provided by His-109, His-111, and Glu-116. An N-linked (GlcNAc...) asparagine glycan is attached at Asn-135. Position 157 (His-157) interacts with Mn(2+).

It belongs to the germin family. In terms of assembly, oligomer (believed to be a pentamer but probably hexamer).

The protein resides in the secreted. Its subcellular location is the extracellular space. It is found in the apoplast. Its function is as follows. Plays a role in broad-spectrum disease resistance. Probably has no oxalate oxidase activity even if the active site is conserved. This chain is Germin-like protein 8-9, found in Oryza sativa subsp. japonica (Rice).